The following is a 417-amino-acid chain: Serine hydroxymethyltransferase (417 aa).

Residues Leu121 and 125–127 contribute to the (6S)-5,6,7,8-tetrahydrofolate site; that span reads GHL. At Lys230 the chain carries N6-(pyridoxal phosphate)lysine. 355 to 357 is a (6S)-5,6,7,8-tetrahydrofolate binding site; sequence SPF.

Belongs to the SHMT family. In terms of assembly, homodimer. Pyridoxal 5'-phosphate serves as cofactor.

It localises to the cytoplasm. The catalysed reaction is (6R)-5,10-methylene-5,6,7,8-tetrahydrofolate + glycine + H2O = (6S)-5,6,7,8-tetrahydrofolate + L-serine. It functions in the pathway one-carbon metabolism; tetrahydrofolate interconversion. The protein operates within amino-acid biosynthesis; glycine biosynthesis; glycine from L-serine: step 1/1. In terms of biological role, catalyzes the reversible interconversion of serine and glycine with tetrahydrofolate (THF) serving as the one-carbon carrier. This reaction serves as the major source of one-carbon groups required for the biosynthesis of purines, thymidylate, methionine, and other important biomolecules. Also exhibits THF-independent aldolase activity toward beta-hydroxyamino acids, producing glycine and aldehydes, via a retro-aldol mechanism. This Nitrosococcus oceani (strain ATCC 19707 / BCRC 17464 / JCM 30415 / NCIMB 11848 / C-107) protein is Serine hydroxymethyltransferase.